We begin with the raw amino-acid sequence, 356 residues long: Formate-nitrite transporter (356 aa).

The Cytoplasmic portion of the chain corresponds to 1-108 (MPREKPRADE…TKATYPIMKM (108 aa)). The chain crosses the membrane as a helical span at residues 109-129 (FSLSVLAGMLLSVGGLLSITI). Topologically, residues 130–142 (GKGIPSSDIGIQK) are extracellular. Residues 143-163 (IVFGFFNSVGLNLVVLCGGEL) traverse the membrane as a helical segment. Topologically, residues 164-182 (FTSNCAFLIPGFMEGAYSR) are cytoplasmic. The helical transmembrane segment at 183–203 (WLFFKTHFVVYFGNLVGSIFV) threads the bilayer. Over 204 to 237 (STYFGKLLGSFESPMYLSAVKQIGETKVAMNWGR) the chain is Extracellular. The helical transmembrane segment at 238 to 258 (ALLSGIGCNWLVCCAVYFSAS) threads the bilayer. Residues 259 to 265 (AKDLLSK) lie on the Cytoplasmic side of the membrane. Residues 266–286 (LVVISFLVLTFASLEFENCVG) traverse the membrane as a helical segment. Residues 287–310 (NMFLLSLSHMYGGNFTLGQWILNN) are Extracellular-facing. Residues 311 to 331 (LIPVSIGNFIGGTFLLGIPLW) form a helical membrane-spanning segment. The Cytoplasmic segment spans residues 332-356 (YVHVSNVYNIPFLDPLYQQSQAKTQ).

This sequence belongs to the FNT transporter (TC 1.A.16) family. As to quaternary structure, homopentamer.

It localises to the membrane. It catalyses the reaction (S)-lactate(in) + H(+)(in) = (S)-lactate(out) + H(+)(out). The catalysed reaction is formate(in) + H(+)(in) = formate(out) + H(+)(out). The enzyme catalyses pyruvate(out) + H(+)(out) = pyruvate(in) + H(+)(in). It carries out the reaction acetate(out) + H(+)(out) = acetate(in) + H(+)(in). In terms of biological role, monocarboxylate-proton symporter; active in acidic-to-neutral pH range. Transports formate, acetate and L-lactate. This chain is Formate-nitrite transporter, found in Entamoeba histolytica (strain ATCC 30459 / HM-1:IMSS / ABRM).